The primary structure comprises 473 residues: Vasculin-like protein 1 (473 aa).

Residues 14–25 (STPQSSKSSTAT) show a composition bias toward polar residues. The disordered stretch occupies residues 14–55 (STPQSSKSSTATFDKHGEHLSRGEGRFGISRRRHNSSDGFFN). Residues 26–38 (FDKHGEHLSRGEG) are compositionally biased toward basic and acidic residues. Residues Ser-49 and Ser-76 each carry the phosphoserine modification. 2 disordered regions span residues 88–127 (GTTG…RKGC) and 155–189 (DFPS…AKQP). The segment covering 103 to 112 (SQRSGGSSTG) has biased composition (polar residues). A compositionally biased stretch (basic residues) spans 113-125 (NHRHWNGSFHSRK). Ser-199 is subject to Phosphoserine. Disordered regions lie at residues 235 to 267 (LVPK…SRES) and 281 to 316 (LAAG…RRTT). Position 289 is a phosphoserine (Ser-289). Low complexity predominate over residues 292-309 (ESPSSTTPPIEISSSRLT). Thr-298 is modified (phosphothreonine). Residue Ser-381 is modified to Phosphoserine. The disordered stretch occupies residues 453-473 (ECEDSDSETSSSQTSDDDAWK).

The protein belongs to the vasculin family.

It localises to the nucleus. In terms of biological role, possible transcription factor. This is Vasculin-like protein 1 (Gpbp1l1) from Mus musculus (Mouse).